Here is a 935-residue protein sequence, read N- to C-terminus: Isoleucine--tRNA ligase (935 aa).

A 'HIGH' region motif is present at residues 58 to 68 (PYANGSIHVGH). Glu558 lines the L-isoleucyl-5'-AMP pocket. Residues 599–603 (KMSKS) carry the 'KMSKS' region motif. Lys602 contributes to the ATP binding site. The Zn(2+) site is built by Cys897, Cys900, Cys917, and Cys920.

Belongs to the class-I aminoacyl-tRNA synthetase family. IleS type 1 subfamily. Monomer. Zn(2+) is required as a cofactor.

It localises to the cytoplasm. It carries out the reaction tRNA(Ile) + L-isoleucine + ATP = L-isoleucyl-tRNA(Ile) + AMP + diphosphate. Its function is as follows. Catalyzes the attachment of isoleucine to tRNA(Ile). As IleRS can inadvertently accommodate and process structurally similar amino acids such as valine, to avoid such errors it has two additional distinct tRNA(Ile)-dependent editing activities. One activity is designated as 'pretransfer' editing and involves the hydrolysis of activated Val-AMP. The other activity is designated 'posttransfer' editing and involves deacylation of mischarged Val-tRNA(Ile). In Francisella tularensis subsp. mediasiatica (strain FSC147), this protein is Isoleucine--tRNA ligase.